We begin with the raw amino-acid sequence, 130 residues long: Large ribosomal subunit protein uL22 (130 aa).

The protein belongs to the universal ribosomal protein uL22 family. As to quaternary structure, part of the 50S ribosomal subunit.

This protein binds specifically to 23S rRNA; its binding is stimulated by other ribosomal proteins, e.g. L4, L17, and L20. It is important during the early stages of 50S assembly. It makes multiple contacts with different domains of the 23S rRNA in the assembled 50S subunit and ribosome. Its function is as follows. The globular domain of the protein is located near the polypeptide exit tunnel on the outside of the subunit, while an extended beta-hairpin is found that lines the wall of the exit tunnel in the center of the 70S ribosome. The sequence is that of Large ribosomal subunit protein uL22 from Clavibacter sepedonicus (Clavibacter michiganensis subsp. sepedonicus).